A 730-amino-acid chain; its full sequence is Catalase R (730 aa).

His105 is a catalytic residue. Tyr392 contributes to the heme binding site. The tract at residues 403–433 (PNFEQIPVNRPRKPVHNNNRDGFGQQQIPTN) is disordered.

This sequence belongs to the catalase family. The cofactor is heme.

It carries out the reaction 2 H2O2 = O2 + 2 H2O. Its function is as follows. Occurs in almost all aerobically respiring organisms and serves to protect cells from the toxic effects of hydrogen peroxide. The polypeptide is Catalase R (catR) (Aspergillus niger).